Reading from the N-terminus, the 475-residue chain is Ribulose bisphosphate carboxylase large chain (475 aa).

A propeptide spanning residues 1 to 2 is cleaved from the precursor; that stretch reads MS. P3 bears the N-acetylproline mark. The residue at position 14 (K14) is an N6,N6,N6-trimethyllysine. Substrate contacts are provided by N123 and T173. K175 (proton acceptor) is an active-site residue. K177 serves as a coordination point for substrate. Positions 201, 203, and 204 each coordinate Mg(2+). K201 is modified (N6-carboxylysine). The Proton acceptor role is filled by H294. Residues R295, H327, and S379 each coordinate substrate.

The protein belongs to the RuBisCO large chain family. Type I subfamily. In terms of assembly, heterohexadecamer of 8 large chains and 8 small chains; disulfide-linked. The disulfide link is formed within the large subunit homodimers. The cofactor is Mg(2+). Post-translationally, the disulfide bond which can form in the large chain dimeric partners within the hexadecamer appears to be associated with oxidative stress and protein turnover.

The protein resides in the plastid. Its subcellular location is the chloroplast. It carries out the reaction 2 (2R)-3-phosphoglycerate + 2 H(+) = D-ribulose 1,5-bisphosphate + CO2 + H2O. It catalyses the reaction D-ribulose 1,5-bisphosphate + O2 = 2-phosphoglycolate + (2R)-3-phosphoglycerate + 2 H(+). In terms of biological role, ruBisCO catalyzes two reactions: the carboxylation of D-ribulose 1,5-bisphosphate, the primary event in carbon dioxide fixation, as well as the oxidative fragmentation of the pentose substrate in the photorespiration process. Both reactions occur simultaneously and in competition at the same active site. The sequence is that of Ribulose bisphosphate carboxylase large chain from Keteleeria davidiana (David's keteleeria).